A 261-amino-acid polypeptide reads, in one-letter code: MSHQAHAYHMVDPSPWPLTGAGAALLMTSGLAMWFHKNSCILMTLGLILMLLTMYQWWRDIVREGTFLGHHTSPVQQGLRYGMILFIISEVCFFAGFFWAFYHASLAPTPELGLTWPPTGINPLNPFEVPLLNTAVLLASGVSVTWAHHSITEKNRTETTQALTLTVLLGLYFTALQIMEYYETPFTMADGVYGSTFFVATGFHGLHVIIGSLFLLTCLLRHLQYHFTSKHHFGFEAAAWYWHFVDVVWLFLYISIYWWGS.

The Mitochondrial matrix segment spans residues 1 to 15; that stretch reads MSHQAHAYHMVDPSP. A helical transmembrane segment spans residues 16-34; sequence WPLTGAGAALLMTSGLAMW. Residues 35 to 40 are Mitochondrial intermembrane-facing; sequence FHKNSC. Residues 41–66 form a helical membrane-spanning segment; the sequence is ILMTLGLILMLLTMYQWWRDIVREGT. The Mitochondrial matrix portion of the chain corresponds to 67 to 72; that stretch reads FLGHHT. Residues 73–105 form a helical membrane-spanning segment; sequence SPVQQGLRYGMILFIISEVCFFAGFFWAFYHAS. Over 106-128 the chain is Mitochondrial intermembrane; that stretch reads LAPTPELGLTWPPTGINPLNPFE. A helical transmembrane segment spans residues 129–152; sequence VPLLNTAVLLASGVSVTWAHHSIT. The Mitochondrial matrix segment spans residues 153–155; the sequence is EKN. The helical transmembrane segment at 156–183 threads the bilayer; sequence RTETTQALTLTVLLGLYFTALQIMEYYE. The Mitochondrial intermembrane portion of the chain corresponds to 184-190; sequence TPFTMAD. A helical transmembrane segment spans residues 191 to 223; the sequence is GVYGSTFFVATGFHGLHVIIGSLFLLTCLLRHL. The Mitochondrial matrix segment spans residues 224 to 232; it reads QYHFTSKHH. Residues 233–256 traverse the membrane as a helical segment; the sequence is FGFEAAAWYWHFVDVVWLFLYISI. The Mitochondrial intermembrane segment spans residues 257-261; the sequence is YWWGS.

The protein belongs to the cytochrome c oxidase subunit 3 family. Component of the cytochrome c oxidase (complex IV, CIV), a multisubunit enzyme composed of 14 subunits. The complex is composed of a catalytic core of 3 subunits MT-CO1, MT-CO2 and MT-CO3, encoded in the mitochondrial DNA, and 11 supernumerary subunits COX4I, COX5A, COX5B, COX6A, COX6B, COX6C, COX7A, COX7B, COX7C, COX8 and NDUFA4, which are encoded in the nuclear genome. The complex exists as a monomer or a dimer and forms supercomplexes (SCs) in the inner mitochondrial membrane with NADH-ubiquinone oxidoreductase (complex I, CI) and ubiquinol-cytochrome c oxidoreductase (cytochrome b-c1 complex, complex III, CIII), resulting in different assemblies (supercomplex SCI(1)III(2)IV(1) and megacomplex MCI(2)III(2)IV(2)).

Its subcellular location is the mitochondrion inner membrane. It carries out the reaction 4 Fe(II)-[cytochrome c] + O2 + 8 H(+)(in) = 4 Fe(III)-[cytochrome c] + 2 H2O + 4 H(+)(out). In terms of biological role, component of the cytochrome c oxidase, the last enzyme in the mitochondrial electron transport chain which drives oxidative phosphorylation. The respiratory chain contains 3 multisubunit complexes succinate dehydrogenase (complex II, CII), ubiquinol-cytochrome c oxidoreductase (cytochrome b-c1 complex, complex III, CIII) and cytochrome c oxidase (complex IV, CIV), that cooperate to transfer electrons derived from NADH and succinate to molecular oxygen, creating an electrochemical gradient over the inner membrane that drives transmembrane transport and the ATP synthase. Cytochrome c oxidase is the component of the respiratory chain that catalyzes the reduction of oxygen to water. Electrons originating from reduced cytochrome c in the intermembrane space (IMS) are transferred via the dinuclear copper A center (CU(A)) of subunit 2 and heme A of subunit 1 to the active site in subunit 1, a binuclear center (BNC) formed by heme A3 and copper B (CU(B)). The BNC reduces molecular oxygen to 2 water molecules using 4 electrons from cytochrome c in the IMS and 4 protons from the mitochondrial matrix. The protein is Cytochrome c oxidase subunit 3 (MT-CO3) of Petromyzon marinus (Sea lamprey).